The sequence spans 152 residues: Lipoprotein signal peptidase (152 aa).

Transmembrane regions (helical) follow at residues 5–25, 61–81, and 84–104; these read LFVL…FWIV, WFFV…LATH, and LNIW…GNFI. Residues Asp-114 and Asp-130 contribute to the active site. Residues 125-145 traverse the membrane as a helical segment; the sequence is IFNVADSYLTVGVILLVICLW.

It belongs to the peptidase A8 family.

It is found in the cell membrane. The catalysed reaction is Release of signal peptides from bacterial membrane prolipoproteins. Hydrolyzes -Xaa-Yaa-Zaa-|-(S,diacylglyceryl)Cys-, in which Xaa is hydrophobic (preferably Leu), and Yaa (Ala or Ser) and Zaa (Gly or Ala) have small, neutral side chains.. It participates in protein modification; lipoprotein biosynthesis (signal peptide cleavage). Its function is as follows. This protein specifically catalyzes the removal of signal peptides from prolipoproteins. In Streptococcus pyogenes serotype M3 (strain ATCC BAA-595 / MGAS315), this protein is Lipoprotein signal peptidase.